Consider the following 206-residue polypeptide: Imidazole glycerol phosphate synthase subunit HisH (206 aa).

A Glutamine amidotransferase type-1 domain is found at 5–206 (SVVVLDYGSG…AVLRNWIERL (202 aa)). Cysteine 83 serves as the catalytic Nucleophile. Active-site residues include histidine 187 and glutamate 189.

Heterodimer of HisH and HisF.

The protein localises to the cytoplasm. The enzyme catalyses 5-[(5-phospho-1-deoxy-D-ribulos-1-ylimino)methylamino]-1-(5-phospho-beta-D-ribosyl)imidazole-4-carboxamide + L-glutamine = D-erythro-1-(imidazol-4-yl)glycerol 3-phosphate + 5-amino-1-(5-phospho-beta-D-ribosyl)imidazole-4-carboxamide + L-glutamate + H(+). It carries out the reaction L-glutamine + H2O = L-glutamate + NH4(+). It functions in the pathway amino-acid biosynthesis; L-histidine biosynthesis; L-histidine from 5-phospho-alpha-D-ribose 1-diphosphate: step 5/9. Its function is as follows. IGPS catalyzes the conversion of PRFAR and glutamine to IGP, AICAR and glutamate. The HisH subunit catalyzes the hydrolysis of glutamine to glutamate and ammonia as part of the synthesis of IGP and AICAR. The resulting ammonia molecule is channeled to the active site of HisF. The polypeptide is Imidazole glycerol phosphate synthase subunit HisH (Mycolicibacterium paratuberculosis (strain ATCC BAA-968 / K-10) (Mycobacterium paratuberculosis)).